Consider the following 129-residue polypeptide: Small ribosomal subunit protein uS11 (129 aa).

It belongs to the universal ribosomal protein uS11 family. In terms of assembly, part of the 30S ribosomal subunit. Interacts with proteins S7 and S18. Binds to IF-3.

Located on the platform of the 30S subunit, it bridges several disparate RNA helices of the 16S rRNA. Forms part of the Shine-Dalgarno cleft in the 70S ribosome. The polypeptide is Small ribosomal subunit protein uS11 (Lactiplantibacillus plantarum (strain ATCC BAA-793 / NCIMB 8826 / WCFS1) (Lactobacillus plantarum)).